The chain runs to 284 residues: NADH-cytochrome b5 reductase 1 (284 aa).

A helical membrane pass occupies residues 7 to 27 (KLVVVIVIVVVPLLFKFIIGP). The FAD-binding FR-type domain occupies 38-142 (NDFQSFPLVE…KGPRGNYHYE (105 aa)). FAD-binding positions include 122–137 (GELK…GPRG) and 148–180 (HLGM…KVSL).

This sequence belongs to the flavoprotein pyridine nucleotide cytochrome reductase family. As to quaternary structure, monomer. Component of the 2-(3-amino-3-carboxypropyl)histidine synthase complex composed of DPH1, DPH2, KTI11/DPH3 and a NADH-dependent reductase, predominantly CBR1. Interacts with KTI11/DPH3. Interacts with STE20. Requires FAD as cofactor.

Its subcellular location is the mitochondrion outer membrane. The enzyme catalyses 2 Fe(III)-[cytochrome b5] + NADH = 2 Fe(II)-[cytochrome b5] + NAD(+) + H(+). It catalyses the reaction 2 Fe(3+)-[Dph3] + NADH = 2 Fe(2+)-[Dph3] + NAD(+) + H(+). Its pathway is protein modification; peptidyl-diphthamide biosynthesis. Competitively inhibited by NAD(+). Inhibited by mercurials such as p-chloromercuribenzoate (PCMB) and HgCl(2). Enzymatic activity increases under anaerobic conditions. NADH-dependent reductase for KTI11/DPH3 and cytochrome b5. Required for the first step of diphthamide biosynthesis, a post-translational modification of histidine which occurs in elongation factor 2. DPH1 and DPH2 transfer a 3-amino-3-carboxypropyl (ACP) group from S-adenosyl-L-methionine (SAM) to a histidine residue, the reaction is assisted by a reduction system comprising KTI11/DPH3 and a NADH-dependent reductase, predominantly CBR1. By reducing KTI11/DPH3, also involved in the formation of the tRNA wobble base modification mcm5s 2U (5-methoxycarbonylmethyl-2-thiouridine), mediated by the elongator complex. The cytochrome b5/NADH cytochrome b5 reductase electron transfer system supports the catalytic activity of several sterol biosynthetic enzymes. Plays a role in bud morphology. The protein is NADH-cytochrome b5 reductase 1 (CBR1) of Saccharomyces cerevisiae (strain ATCC 204508 / S288c) (Baker's yeast).